Reading from the N-terminus, the 326-residue chain is Sulfate/thiosulfate import ATP-binding protein CysA (326 aa).

The ABC transporter domain maps to 3–237; it reads IEVRNVSKNF…PSNDFVYHFL (235 aa). Residue 35–42 participates in ATP binding; that stretch reads GPSGCGKT.

It belongs to the ABC transporter superfamily. Sulfate/tungstate importer (TC 3.A.1.6) family. In terms of assembly, the complex is composed of two ATP-binding proteins (CysA), two transmembrane proteins (CysT and CysW) and a solute-binding protein (CysP).

It localises to the cell inner membrane. The catalysed reaction is sulfate(out) + ATP + H2O = sulfate(in) + ADP + phosphate + H(+). The enzyme catalyses thiosulfate(out) + ATP + H2O = thiosulfate(in) + ADP + phosphate + H(+). In terms of biological role, part of the ABC transporter complex CysAWTP involved in sulfate/thiosulfate import. Responsible for energy coupling to the transport system. The sequence is that of Sulfate/thiosulfate import ATP-binding protein CysA from Pseudomonas syringae pv. tomato (strain ATCC BAA-871 / DC3000).